Here is a 591-residue protein sequence, read N- to C-terminus: Proteasome-associated ATPase (591 aa).

The stretch at 8–77 (DSVAAARELE…LREEVDRLGQ (70 aa)) forms a coiled coil. Residue 278–283 (GCGKTL) participates in ATP binding. Residues 590–591 (YL) are docks into pockets in the proteasome alpha-ring.

It belongs to the AAA ATPase family. In terms of assembly, homohexamer. Assembles into a hexameric ring structure that caps the 20S proteasome core. Strongly interacts with the prokaryotic ubiquitin-like protein Pup through a hydrophobic interface; the interacting region of ARC lies in its N-terminal coiled-coil domain. There is one Pup binding site per ARC hexamer ring. Upon ATP-binding, the C-terminus of ARC interacts with the alpha-rings of the proteasome core, possibly by binding to the intersubunit pockets.

Its pathway is protein degradation; proteasomal Pup-dependent pathway. ATPase which is responsible for recognizing, binding, unfolding and translocation of pupylated proteins into the bacterial 20S proteasome core particle. May be essential for opening the gate of the 20S proteasome via an interaction with its C-terminus, thereby allowing substrate entry and access to the site of proteolysis. Thus, the C-termini of the proteasomal ATPase may function like a 'key in a lock' to induce gate opening and therefore regulate proteolysis. In Rhodococcus jostii (strain RHA1), this protein is Proteasome-associated ATPase.